Consider the following 274-residue polypeptide: Probable endonuclease LCL3 (274 aa).

Residues 15–32 form a helical membrane-spanning segment; the sequence is AVLSIILTGSTLTLIYTY. Residues 53-261 form the TNase-like domain; that stretch reads HWLYGKVTSV…RSRKKGLWIQ (209 aa). Arg-151 is an active-site residue. Asp-156 is a binding site for Ca(2+). Active-site residues include Glu-159 and Arg-199.

Belongs to the LCL3 family.

The protein localises to the mitochondrion. It is found in the membrane. In Saccharomyces cerevisiae (strain RM11-1a) (Baker's yeast), this protein is Probable endonuclease LCL3 (LCL3).